Consider the following 253-residue polypeptide: Ribosomal RNA small subunit methyltransferase G (253 aa).

S-adenosyl-L-methionine contacts are provided by residues G84, F89, 135–136, and R154; that span reads AE. Residues 228–253 form a disordered region; sequence TPAKYPRREGVPTHQPLFWKAKEQSR.

This sequence belongs to the methyltransferase superfamily. RNA methyltransferase RsmG family.

It is found in the cytoplasm. Specifically methylates the N7 position of a guanine in 16S rRNA. The sequence is that of Ribosomal RNA small subunit methyltransferase G from Deinococcus radiodurans (strain ATCC 13939 / DSM 20539 / JCM 16871 / CCUG 27074 / LMG 4051 / NBRC 15346 / NCIMB 9279 / VKM B-1422 / R1).